Reading from the N-terminus, the 256-residue chain is Glucosamine-6-phosphate deaminase (256 aa).

Residue Asp-68 is the Proton acceptor; for enolization step of the active site. The For ring-opening step role is filled by Asn-137. His-139 serves as the catalytic Proton acceptor; for ring-opening step. Residue Glu-144 is the For ring-opening step of the active site.

This sequence belongs to the glucosamine/galactosamine-6-phosphate isomerase family. NagB subfamily.

It carries out the reaction alpha-D-glucosamine 6-phosphate + H2O = beta-D-fructose 6-phosphate + NH4(+). Its pathway is amino-sugar metabolism; N-acetylneuraminate degradation; D-fructose 6-phosphate from N-acetylneuraminate: step 5/5. Functionally, catalyzes the reversible isomerization-deamination of glucosamine 6-phosphate (GlcN6P) to form fructose 6-phosphate (Fru6P) and ammonium ion. In Mycoplasmopsis pulmonis (strain UAB CTIP) (Mycoplasma pulmonis), this protein is Glucosamine-6-phosphate deaminase.